Reading from the N-terminus, the 356-residue chain is Branched-chain-amino-acid transaminase 1 (356 aa).

Position 197 is an N6-(pyridoxal phosphate)lysine (K197).

Belongs to the class-IV pyridoxal-phosphate-dependent aminotransferase family. It depends on pyridoxal 5'-phosphate as a cofactor.

The catalysed reaction is L-leucine + 2-oxoglutarate = 4-methyl-2-oxopentanoate + L-glutamate. It carries out the reaction L-isoleucine + 2-oxoglutarate = (S)-3-methyl-2-oxopentanoate + L-glutamate. It catalyses the reaction L-valine + 2-oxoglutarate = 3-methyl-2-oxobutanoate + L-glutamate. The protein operates within amino-acid biosynthesis; L-isoleucine biosynthesis; L-isoleucine from 2-oxobutanoate: step 4/4. It functions in the pathway amino-acid biosynthesis; L-leucine biosynthesis; L-leucine from 3-methyl-2-oxobutanoate: step 4/4. Its pathway is amino-acid biosynthesis; L-valine biosynthesis; L-valine from pyruvate: step 4/4. Its activity is regulated as follows. Inhibited by canaline. Transaminates branched-chain amino acids and ketoglutarate. Involved in the final step of the methionine regeneration pathway, where ketomethiobutyrate (KMTB) is converted to methionine via a transamination. The amino donor preference is isoleucine, leucine, valine, phenylalanine, and tyrosine. The chain is Branched-chain-amino-acid transaminase 1 (ilvE) from Bacillus subtilis (strain 168).